The primary structure comprises 357 residues: Protein-glutamate methylesterase/protein-glutamine glutaminase 5 (357 aa).

In terms of domain architecture, Response regulatory spans 10-127 (RVLVVDDSSF…IDAQKAFKEE (118 aa)). Position 61 is a 4-aspartylphosphate (aspartate 61). The CheB-type methylesterase domain maps to 161-357 (PRPAGQRYQY…IGTEITKIAG (197 aa)). Residues serine 176, histidine 203, and aspartate 301 contribute to the active site.

It belongs to the CheB family. Phosphorylated by CheA. Phosphorylation of the N-terminal regulatory domain activates the methylesterase activity.

It localises to the cytoplasm. The catalysed reaction is [protein]-L-glutamate 5-O-methyl ester + H2O = L-glutamyl-[protein] + methanol + H(+). It catalyses the reaction L-glutaminyl-[protein] + H2O = L-glutamyl-[protein] + NH4(+). Involved in chemotaxis. Part of a chemotaxis signal transduction system that modulates chemotaxis in response to various stimuli. Catalyzes the demethylation of specific methylglutamate residues introduced into the chemoreceptors (methyl-accepting chemotaxis proteins or MCP) by CheR. Also mediates the irreversible deamidation of specific glutamine residues to glutamic acid. In Geobacter metallireducens (strain ATCC 53774 / DSM 7210 / GS-15), this protein is Protein-glutamate methylesterase/protein-glutamine glutaminase 5.